Reading from the N-terminus, the 483-residue chain is MEHYSLAQLSKALHNREFSSVELTQHCINKIQSNKDLNAFISLDEDQALKEAQSADLVLKNGEGKPLTGIPMALKDLFCTKRLNTTCASKMLANFQAPYDATIVTKFKQNGAIIIGKTNMDEFAMGSSNENSYFGSVKNPWDRERVPGGSSGGSAAAVAGNLVPFAIGSDTGGSIRQPAAFCGISGIKPTYGLVSRYGMVAFASSLDQAGPFAKSAEDLAMILHCIAGFDSKDSTSVDRVIPDYSAEIKKPVDKIRIGLPSCFFQPQVEKGIQDAIHDAVKLFENLGAEIIEIDLKLQPLWVPCYYVIACAEASSNLSRYDGIRFGHRSKSASTLIELITNSRSEGFGNEVKRRILTGTHVLSTGFFNAYYLHAQKVRRLIRDELITTLNSVDVIIGPTTPTTAFKLGEKINDPIQNYLADVFTVAANLAGLPAISIPTGFENKLPIGLQLMGKHFSESRLLAIAHHYQQHTNWHLANPNKQG.

Catalysis depends on charge relay system residues Lys-75 and Ser-150. The active-site Acyl-ester intermediate is Ser-174.

This sequence belongs to the amidase family. GatA subfamily. In terms of assembly, heterotrimer of A, B and C subunits.

It carries out the reaction L-glutamyl-tRNA(Gln) + L-glutamine + ATP + H2O = L-glutaminyl-tRNA(Gln) + L-glutamate + ADP + phosphate + H(+). Allows the formation of correctly charged Gln-tRNA(Gln) through the transamidation of misacylated Glu-tRNA(Gln) in organisms which lack glutaminyl-tRNA synthetase. The reaction takes place in the presence of glutamine and ATP through an activated gamma-phospho-Glu-tRNA(Gln). The polypeptide is Glutamyl-tRNA(Gln) amidotransferase subunit A (Legionella pneumophila (strain Corby)).